The sequence spans 584 residues: MKYRTHRCNELSLSNVGERVRLSGWVHRYRNHGGVVFIDLRDRFGITQIVCREDEKPELHQLVDSVRSEWVLSIEGTVCRRLEGMENANLATGEIEVDIEKVDILSKAKNLPFSISDDHIHVNEELRLEYRYLDMRRGQILDRLVHRHKVMMACRQYMDKQGFTEVVTPILGKSTPEGARDYLVPSRIYPGSFYALPQSPQLFKQILMVGGLDRYFQIATCFRDEDLRADRQPEFAQIDIEMSFGTPNDLFPIIEQLVVEMFAVQGIKIDLPLPRMTYQEAKDLYGTDKPDLRFGLQLHDCREHAKEFSFSIFLDQLAQGGTIKGFCVPGGADMSRKQLDVYTEFVKRYGAMGLVWIKKQESGIASNVAKFASEAVFQAMFADFGAQNNDILLLIAAPEDVANQSLDHLRRLIAKERNFYNEAQYNFVWITDFPLFAKEDGKICSEHHPFTSPLDEDIPLLDKDPLSVRSSSYDLVLNGYEIASGSQRIHNADLQNKIFSILELSPESIKEKFDFFIDALSFGTPPHLGIALGLDRIMMVLTGAEGIREVIAFPKTQKAADLMMDAPAEIMTSQLKELSIKVTS.

Glutamate 177 is a binding site for L-aspartate. The interval 201–204 (QLFK) is aspartate. Arginine 223 is a binding site for L-aspartate. ATP contacts are provided by residues 223-225 (RDE) and glutamine 232. Residue histidine 447 participates in L-aspartate binding. Glutamate 481 lines the ATP pocket. Position 488 (arginine 488) interacts with L-aspartate. 533 to 536 (GLDR) is an ATP binding site.

The protein belongs to the class-II aminoacyl-tRNA synthetase family. Type 1 subfamily. As to quaternary structure, homodimer.

Its subcellular location is the cytoplasm. The catalysed reaction is tRNA(Asx) + L-aspartate + ATP = L-aspartyl-tRNA(Asx) + AMP + diphosphate. Its function is as follows. Aspartyl-tRNA synthetase with relaxed tRNA specificity since it is able to aspartylate not only its cognate tRNA(Asp) but also tRNA(Asn). Reaction proceeds in two steps: L-aspartate is first activated by ATP to form Asp-AMP and then transferred to the acceptor end of tRNA(Asp/Asn). The sequence is that of Aspartate--tRNA(Asp/Asn) ligase from Chlamydia abortus (strain DSM 27085 / S26/3) (Chlamydophila abortus).